The following is a 254-amino-acid chain: Probable transcriptional regulatory protein Saro_0419 (254 aa).

Positions 1 to 14 (MAGHSKFKNIMHRK) are enriched in basic residues. The disordered stretch occupies residues 1–22 (MAGHSKFKNIMHRKGAQDKKRS).

The protein belongs to the TACO1 family.

Its subcellular location is the cytoplasm. This is Probable transcriptional regulatory protein Saro_0419 from Novosphingobium aromaticivorans (strain ATCC 700278 / DSM 12444 / CCUG 56034 / CIP 105152 / NBRC 16084 / F199).